The primary structure comprises 271 residues: 5-amino-6-(5-phospho-D-ribitylamino)uracil phosphatase YbjI (271 aa).

Aspartate 9 acts as the Nucleophile in catalysis. Residue aspartate 9 coordinates Mg(2+). Residue methionine 10 coordinates phosphate. Residue aspartate 11 coordinates Mg(2+). Residues 44-45 and lysine 192 each bind phosphate; that span reads SG. Aspartate 215 lines the Mg(2+) pocket. Asparagine 218 provides a ligand contact to phosphate.

The protein belongs to the HAD-like hydrolase superfamily. Cof family. Mg(2+) serves as cofactor. Mn(2+) is required as a cofactor. The cofactor is Co(2+). It depends on Zn(2+) as a cofactor.

The enzyme catalyses 5-amino-6-(5-phospho-D-ribitylamino)uracil + H2O = 5-amino-6-(D-ribitylamino)uracil + phosphate. It participates in cofactor biosynthesis; riboflavin biosynthesis; 5-amino-6-(D-ribitylamino)uracil from GTP: step 4/4. Catalyzes the dephosphorylation of 5-amino-6-(5-phospho-D-ribitylamino)uracil, and thus could be involved in the riboflavin biosynthesis pathway. Is also able to dephosphorylate flavin mononucleotide (FMN), erythrose 4-phosphate and other phosphoric acid esters. This is 5-amino-6-(5-phospho-D-ribitylamino)uracil phosphatase YbjI (ybjI) from Escherichia coli (strain K12).